Here is a 281-residue protein sequence, read N- to C-terminus: Pantothenate synthetase (281 aa).

An ATP-binding site is contributed by 30–37 (MGYLHEGH). Residue histidine 37 is the Proton donor of the active site. Position 61 (glutamine 61) interacts with (R)-pantoate. Glutamine 61 contacts beta-alanine. 147–150 (GEKD) lines the ATP pocket. Glutamine 153 is a (R)-pantoate binding site. Residues isoleucine 176 and 184-187 (KSSR) contribute to the ATP site.

It belongs to the pantothenate synthetase family. In terms of assembly, homodimer.

Its subcellular location is the cytoplasm. The enzyme catalyses (R)-pantoate + beta-alanine + ATP = (R)-pantothenate + AMP + diphosphate + H(+). Its pathway is cofactor biosynthesis; (R)-pantothenate biosynthesis; (R)-pantothenate from (R)-pantoate and beta-alanine: step 1/1. Functionally, catalyzes the condensation of pantoate with beta-alanine in an ATP-dependent reaction via a pantoyl-adenylate intermediate. This Clostridium botulinum (strain Kyoto / Type A2) protein is Pantothenate synthetase.